Consider the following 479-residue polypeptide: Adenosylhomocysteinase (479 aa).

Residues Thr56, Asp134, and Glu200 each coordinate substrate. An NAD(+)-binding site is contributed by 201-203; sequence TTT. Lys230 and Asp234 together coordinate substrate. Residues Asn235, 264–269, Glu287, Asn322, 343–345, and Asn391 contribute to the NAD(+) site; these read GYGDVG and IGH.

It belongs to the adenosylhomocysteinase family. As to quaternary structure, homotetramer. It depends on NAD(+) as a cofactor.

The catalysed reaction is S-adenosyl-L-homocysteine + H2O = L-homocysteine + adenosine. Its pathway is amino-acid biosynthesis; L-homocysteine biosynthesis; L-homocysteine from S-adenosyl-L-homocysteine: step 1/1. Its function is as follows. Adenosylhomocysteine is a competitive inhibitor of S-adenosyl-L-methionine-dependent methyl transferase reactions; therefore adenosylhomocysteinase may play a key role in the control of methylations via regulation of the intracellular concentration of adenosylhomocysteine. The chain is Adenosylhomocysteinase from Plasmodium falciparum (isolate 3D7).